We begin with the raw amino-acid sequence, 219 residues long: ATP phosphoribosyltransferase (219 aa).

The protein belongs to the ATP phosphoribosyltransferase family. Short subfamily. In terms of assembly, heteromultimer composed of HisG and HisZ subunits.

It localises to the cytoplasm. The catalysed reaction is 1-(5-phospho-beta-D-ribosyl)-ATP + diphosphate = 5-phospho-alpha-D-ribose 1-diphosphate + ATP. Its pathway is amino-acid biosynthesis; L-histidine biosynthesis; L-histidine from 5-phospho-alpha-D-ribose 1-diphosphate: step 1/9. In terms of biological role, catalyzes the condensation of ATP and 5-phosphoribose 1-diphosphate to form N'-(5'-phosphoribosyl)-ATP (PR-ATP). Has a crucial role in the pathway because the rate of histidine biosynthesis seems to be controlled primarily by regulation of HisG enzymatic activity. The chain is ATP phosphoribosyltransferase from Syntrophotalea carbinolica (strain DSM 2380 / NBRC 103641 / GraBd1) (Pelobacter carbinolicus).